The chain runs to 191 residues: Protein GrpE (191 aa).

Belongs to the GrpE family. As to quaternary structure, homodimer.

The protein localises to the cytoplasm. Functionally, participates actively in the response to hyperosmotic and heat shock by preventing the aggregation of stress-denatured proteins, in association with DnaK and GrpE. It is the nucleotide exchange factor for DnaK and may function as a thermosensor. Unfolded proteins bind initially to DnaJ; upon interaction with the DnaJ-bound protein, DnaK hydrolyzes its bound ATP, resulting in the formation of a stable complex. GrpE releases ADP from DnaK; ATP binding to DnaK triggers the release of the substrate protein, thus completing the reaction cycle. Several rounds of ATP-dependent interactions between DnaJ, DnaK and GrpE are required for fully efficient folding. The polypeptide is Protein GrpE (Listeria monocytogenes serotype 4b (strain CLIP80459)).